We begin with the raw amino-acid sequence, 157 residues long: Acetyltransferase PseH (157 aa).

Positions 5–152 constitute an N-acetyltransferase domain; the sequence is KNFTELNSQE…YHICLKQSDC (148 aa).

Functionally, catalyzes the third step in the biosynthesis of pseudaminic acid, a sialic-acid-like sugar that is used to modify flagellin. Mediates N-4 acetylation of UDP-4-amino-4,6-dideoxy-beta-L-AltNAc to form UDP-2,4-diacetamido-2,4,6-trideoxy-beta-L-altropyranose. In Campylobacter jejuni subsp. jejuni serotype O:23/36 (strain 81-176), this protein is Acetyltransferase PseH (pseH).